Consider the following 113-residue polypeptide: Carboxysome shell protein CcmK1 (113 aa).

One can recognise a BMC domain in the interval 4–90; that stretch reads AVGMIETLGF…PHENLEYVLP (87 aa).

The protein belongs to the bacterial microcompartments protein family. CcmK subfamily. Homohexamer. Interacts preferentially with CcmK2 and CcmK4a rather than itself in vitro.

It is found in the carboxysome. In terms of biological role, one of the shell proteins of the carboxysome, a polyhedral inclusion where RuBisCO (ribulose bisphosphate carboxylase, rbcL-rbcS) is sequestered. Assembles into hexamers which make sheets that form the facets of the polyhedral carboxysome. The hexamer central pore probably regulates metabolite flux. This is Carboxysome shell protein CcmK1 from Thermosynechococcus vestitus (strain NIES-2133 / IAM M-273 / BP-1).